The sequence spans 569 residues: Formate hydrogenlyase subunit 5 (569 aa).

The propeptide occupies 538–569; the sequence is MTVVDVRKKKSKVVPYKELERYSIERKNSPLK.

The protein belongs to the complex I 49 kDa subunit family. As to quaternary structure, FHL comprises of a formate dehydrogenase, unidentified electron carriers and a hydrogenase (isoenzyme 3). In this non-energy conserving pathway molecular hydrogen and carbodioxide from formate are released. [4Fe-4S] cluster serves as cofactor. The cofactor is Ni(2+).

This chain is Formate hydrogenlyase subunit 5 (hycE), found in Escherichia coli (strain K12).